The chain runs to 355 residues: Chromosomal protein D1 (355 aa).

Methionine 1 bears the N-acetylmethionine mark. The disordered stretch occupies residues 1–355 (MEEVAVKKRG…NYNDSESVAA (355 aa)). The segment at residues 7-14 (KKRGRPSK) is a DNA-binding region (a.T hook 1). Position 30 is a phosphoserine (serine 30). 2 consecutive DNA-binding regions (a.T hook) follow at residues 34–41 (KKRGRPAK) and 60–67 (KIQNDEDP). Residues 64 to 77 (DEDPEDEGEEDGDG) show a composition bias toward acidic residues. 3 positions are modified to phosphoserine: serine 80, serine 88, and serine 89. Residues 94–101 (KGRGRPKS) constitute a DNA-binding region (a.T hook 4). Residues serine 107, serine 109, and serine 112 each carry the phosphoserine modification. The residue at position 115 (threonine 115) is a Phosphothreonine. Phosphoserine is present on serine 118. The span at 119 to 130 (AKKRKAGRPKKH) shows a compositional bias: basic residues. Positions 122-129 (RKAGRPKK) form a DNA-binding region, a.T hook 5. Phosphoserine; by CK2 occurs at positions 133 and 135. A compositionally biased stretch (acidic residues) spans 135–147 (SENEDDQDEDDDG). 5 positions are modified to phosphoserine: serine 149, serine 150, serine 161, serine 164, and serine 170. Positions 155–162 (RPVGRPSA) form a DNA-binding region, a.T hook 6. Residues 174–181 (RGLGRPKK) constitute a DNA-binding region (a.T hook 7). The residue at position 186 (serine 186) is a Phosphoserine; by CK2. The segment at residues 196-203 (KKRGRPPQ) is a DNA-binding region (a.T hook 8). The residue at position 208 (serine 208) is a Phosphoserine. Positions 219–226 (RPRGRPKA) form a DNA-binding region, a.T hook 9. Residues 237–247 (NDDDQDDENSG) show a composition bias toward acidic residues. Phosphoserine occurs at positions 246, 252, and 253. DNA-binding regions (a.T hook) lie at residues 262-269 (KKRGRPSL) and 281-288 (KPRSRPAK). Residues serine 299 and serine 307 each carry the phosphoserine modification. Positions 307 to 318 (SKKESNDEDRAV) are enriched in basic and acidic residues. At serine 311 the chain carries Phosphoserine; by CK2. Threonine 321 is subject to Phosphothreonine. Residue serine 332 is modified to Phosphoserine; by CK2. Residues 345 to 355 (DNYNDSESVAA) show a composition bias toward polar residues.

It is found in the nucleus. Its subcellular location is the chromosome. Its function is as follows. This satellite DNA-associated protein is a double-stranded DNA binding protein specific for tracts of pure at DNA. It may play a role in organizing the higher-order structure of euchromatin as well as heterochromatin. The chain is Chromosomal protein D1 (D1) from Drosophila melanogaster (Fruit fly).